Reading from the N-terminus, the 361-residue chain is tRNA-specific 2-thiouridylase MnmA (361 aa).

ATP is bound by residues 8-15 (GMSGGVDS) and Met-34. Residues 94 to 96 (NPD) form an interaction with target base in tRNA region. The Nucleophile role is filled by Cys-99. A disulfide bridge connects residues Cys-99 and Cys-195. ATP is bound at residue Gly-123. An interaction with tRNA region spans residues 145–147 (KDQ). Cys-195 serves as the catalytic Cysteine persulfide intermediate. Residues 307–308 (RY) are interaction with tRNA.

This sequence belongs to the MnmA/TRMU family.

The protein localises to the cytoplasm. The enzyme catalyses S-sulfanyl-L-cysteinyl-[protein] + uridine(34) in tRNA + AH2 + ATP = 2-thiouridine(34) in tRNA + L-cysteinyl-[protein] + A + AMP + diphosphate + H(+). Catalyzes the 2-thiolation of uridine at the wobble position (U34) of tRNA, leading to the formation of s(2)U34. The sequence is that of tRNA-specific 2-thiouridylase MnmA from Legionella pneumophila (strain Lens).